We begin with the raw amino-acid sequence, 823 residues long: Lon protease (823 aa).

The region spanning Leu-22–His-217 is the Lon N-terminal domain. Position 369–376 (Gly-369–Thr-376) interacts with ATP. Positions Lys-605–Thr-786 constitute a Lon proteolytic domain. Catalysis depends on residues Ser-692 and Lys-735. The segment at Pro-788–Ser-823 is disordered.

The protein belongs to the peptidase S16 family. As to quaternary structure, homohexamer. Organized in a ring with a central cavity.

It localises to the cytoplasm. The catalysed reaction is Hydrolysis of proteins in presence of ATP.. ATP-dependent serine protease that mediates the selective degradation of mutant and abnormal proteins as well as certain short-lived regulatory proteins. Required for cellular homeostasis and for survival from DNA damage and developmental changes induced by stress. Degrades polypeptides processively to yield small peptide fragments that are 5 to 10 amino acids long. Binds to DNA in a double-stranded, site-specific manner. This is Lon protease from Geobacter metallireducens (strain ATCC 53774 / DSM 7210 / GS-15).